A 413-amino-acid polypeptide reads, in one-letter code: MGLKNFLEKIEHHFEAGGKLEKYYPLYEAAATIFYTQGKVTPGASHVRDAIDLKRMMILVWFAVFPAMFWGMYNVGYQAIPALNQLYSGAELQQVIAGDWHYRLAQMLGASLTPDAGWASKMLLGAAYFLPIYAVVFLVGGFWEVVFSIVRKHEINEGFFVTSILFSLIVPPTLPLWQAALGISFGVVIGKEIFGGTGRNFLNPALAGRAFLFFAYPAQISGDLVWTSADGFSGATPLSQWSVNGSHSLVNTVSGQPITWMDAFLGYIPGSIGEVSTLMILIGGAIIIFGRVASWRIVAGVMIGMIATAYLFNWIGSTTNPLFAMPWYWHLVLGGFAFGMIFMATDPVSASFTNKGKWWYGGLIGVMCILIRVANPAYPEGMMLAILFANLFAPLFDYVVVQANIKRRKARGE.

3 consecutive transmembrane segments (helical) span residues 56 to 76, 123 to 143, and 169 to 189; these read MMILVWFAVFPAMFWGMYNVG, LLGAAYFLPIYAVVFLVGGFW, and IVPPTLPLWQAALGISFGVVI. Residue Thr-236 is modified to FMN phosphoryl threonine. The next 5 helical transmembrane spans lie at 270–290, 297–317, 322–342, 358–378, and 381–401; these read GSIGEVSTLMILIGGAIIIFG, IVAGVMIGMIATAYLFNWIGS, LFAMPWYWHLVLGGFAFGMIF, WWYGGLIGVMCILIRVANPAY, and GMMLAILFANLFAPLFDYVVV.

Belongs to the NqrB/RnfD family. Composed of six subunits; NqrA, NqrB, NqrC, NqrD, NqrE and NqrF. The cofactor is FMN.

It localises to the cell inner membrane. It carries out the reaction a ubiquinone + n Na(+)(in) + NADH + H(+) = a ubiquinol + n Na(+)(out) + NAD(+). Functionally, NQR complex catalyzes the reduction of ubiquinone-1 to ubiquinol by two successive reactions, coupled with the transport of Na(+) ions from the cytoplasm to the periplasm. NqrA to NqrE are probably involved in the second step, the conversion of ubisemiquinone to ubiquinol. The chain is Na(+)-translocating NADH-quinone reductase subunit B from Yersinia pestis.